A 548-amino-acid chain; its full sequence is Chaperonin GroEL 2 (548 aa).

Residues 29–32, 86–90, glycine 418, 482–484, and aspartate 498 contribute to the ATP site; these read TLGP, DGTTT, and NAA.

The protein belongs to the chaperonin (HSP60) family. In terms of assembly, forms a cylinder of 14 subunits composed of two heptameric rings stacked back-to-back. Interacts with the co-chaperonin GroES.

It localises to the cytoplasm. It catalyses the reaction ATP + H2O + a folded polypeptide = ADP + phosphate + an unfolded polypeptide.. Functionally, together with its co-chaperonin GroES, plays an essential role in assisting protein folding. The GroEL-GroES system forms a nano-cage that allows encapsulation of the non-native substrate proteins and provides a physical environment optimized to promote and accelerate protein folding. This is Chaperonin GroEL 2 from Corynebacterium glutamicum (strain ATCC 13032 / DSM 20300 / JCM 1318 / BCRC 11384 / CCUG 27702 / LMG 3730 / NBRC 12168 / NCIMB 10025 / NRRL B-2784 / 534).